Reading from the N-terminus, the 522-residue chain is Ankyrin repeat and death domain-containing protein 1A (522 aa).

ANK repeat units follow at residues 14 to 43 (PLER…NTRA), 47 to 76 (VGRV…AVDE), 90 to 119 (FGMN…KIHC), 123 to 152 (DGLT…DVAL), 158 to 187 (LGRT…DHNV), 191 to 220 (EGNT…DLEE), 224 to 253 (EGLT…TVNA), 257 to 286 (KNLS…CANV), 290 to 319 (QGAS…DVNA), 323 to 352 (RQQT…DLNL), and 356 to 385 (QGKT…FYRW). A Death domain is found at 413–501 (SVLWRLASRY…DLAGWSTMAR (89 aa)).

This Homo sapiens (Human) protein is Ankyrin repeat and death domain-containing protein 1A (ANKDD1A).